The chain runs to 161 residues: Ribosome maturation factor RimP (161 aa).

The protein belongs to the RimP family.

Its subcellular location is the cytoplasm. Its function is as follows. Required for maturation of 30S ribosomal subunits. This chain is Ribosome maturation factor RimP, found in Rickettsia rickettsii (strain Iowa).